The sequence spans 215 residues: 3-isopropylmalate dehydratase small subunit (215 aa).

This sequence belongs to the LeuD family. LeuD type 1 subfamily. As to quaternary structure, heterodimer of LeuC and LeuD.

The catalysed reaction is (2R,3S)-3-isopropylmalate = (2S)-2-isopropylmalate. The protein operates within amino-acid biosynthesis; L-leucine biosynthesis; L-leucine from 3-methyl-2-oxobutanoate: step 2/4. Functionally, catalyzes the isomerization between 2-isopropylmalate and 3-isopropylmalate, via the formation of 2-isopropylmaleate. This chain is 3-isopropylmalate dehydratase small subunit, found in Xanthomonas axonopodis pv. citri (strain 306).